Here is a 1503-residue protein sequence, read N- to C-terminus: Rho GTPase-activating protein 5 (1503 aa).

FF domains lie at Gln267–Gln325, Lys366–His420, Arg427–Glu481, and Ile482–Phe548. Tyr550 carries the post-translational modification 3'-nitrotyrosine. Phosphoserine occurs at positions 590 and 765. The 174-residue stretch at Ser590–Val763 folds into the pG1 pseudoGTPase domain. One can recognise a pG2 pseudoGTPase domain in the interval Arg779 to Met944. Phosphoserine is present on residues Ser951 and Ser968. 3 disordered regions span residues Tyr975–Pro1004, His1022–Asn1050, and Asn1069–Tyr1091. Residues Val1036–Val1045 are compositionally biased toward pro residues. The residue at position 1115 (Ser1115) is a Phosphoserine. Disordered regions lie at residues Asn1129 to Lys1157 and Tyr1169 to Asn1255. Residues Arg1141–Pro1151 show a composition bias toward basic and acidic residues. Ser1196, Ser1203, and Ser1219 each carry phosphoserine. Residues Met1263–Phe1450 enclose the Rho-GAP domain.

May interact with RASA1/p120GAP. Expressed in spinal cord, cerebellum, kidney, testis and lung.

The protein localises to the cytoplasm. It localises to the cell membrane. In terms of biological role, GTPase-activating protein for Rho family members. This is Rho GTPase-activating protein 5 (Arhgap5) from Mus musculus (Mouse).